The primary structure comprises 198 residues: Transcription factor FapR (198 aa).

Residues 102 to 167 (TRIARGHHLF…HGRTIVEVNS (66 aa)) enclose the MaoC-like domain.

Belongs to the FapR family.

In terms of biological role, transcriptional factor involved in regulation of membrane lipid biosynthesis by repressing genes involved in fatty acid and phospholipid metabolism. The chain is Transcription factor FapR from Geobacillus kaustophilus (strain HTA426).